The primary structure comprises 206 residues: Small ribosomal subunit protein uS4 (206 aa).

The region spanning 96-156 (CRLDNVVYRM…EKSSNQLRIV (61 aa)) is the S4 RNA-binding domain.

Belongs to the universal ribosomal protein uS4 family. As to quaternary structure, part of the 30S ribosomal subunit. Contacts protein S5. The interaction surface between S4 and S5 is involved in control of translational fidelity.

Functionally, one of the primary rRNA binding proteins, it binds directly to 16S rRNA where it nucleates assembly of the body of the 30S subunit. In terms of biological role, with S5 and S12 plays an important role in translational accuracy. This is Small ribosomal subunit protein uS4 from Pseudomonas putida (strain W619).